We begin with the raw amino-acid sequence, 951 residues long: Valine--tRNA ligase (951 aa).

Positions 42–52 (PNVTGSLHMGH) match the 'HIGH' region motif. Residues 554–558 (KMSKS) carry the 'KMSKS' region motif. Lys557 serves as a coordination point for ATP. Residues 880-944 (AGLINKEDEL…AEAKAKLIEQ (65 aa)) are a coiled coil.

The protein belongs to the class-I aminoacyl-tRNA synthetase family. ValS type 1 subfamily. In terms of assembly, monomer.

It is found in the cytoplasm. The catalysed reaction is tRNA(Val) + L-valine + ATP = L-valyl-tRNA(Val) + AMP + diphosphate. Its function is as follows. Catalyzes the attachment of valine to tRNA(Val). As ValRS can inadvertently accommodate and process structurally similar amino acids such as threonine, to avoid such errors, it has a 'posttransfer' editing activity that hydrolyzes mischarged Thr-tRNA(Val) in a tRNA-dependent manner. The protein is Valine--tRNA ligase of Escherichia coli O6:H1 (strain CFT073 / ATCC 700928 / UPEC).